Consider the following 392-residue polypeptide: Anhydro-N-acetylmuramic acid kinase (392 aa).

22–29 (GTSMDGVD) is a binding site for ATP.

It belongs to the anhydro-N-acetylmuramic acid kinase family.

It carries out the reaction 1,6-anhydro-N-acetyl-beta-muramate + ATP + H2O = N-acetyl-D-muramate 6-phosphate + ADP + H(+). It functions in the pathway amino-sugar metabolism; 1,6-anhydro-N-acetylmuramate degradation. The protein operates within cell wall biogenesis; peptidoglycan recycling. Functionally, catalyzes the specific phosphorylation of 1,6-anhydro-N-acetylmuramic acid (anhMurNAc) with the simultaneous cleavage of the 1,6-anhydro ring, generating MurNAc-6-P. Is required for the utilization of anhMurNAc either imported from the medium or derived from its own cell wall murein, and thus plays a role in cell wall recycling. This chain is Anhydro-N-acetylmuramic acid kinase, found in Burkholderia pseudomallei (strain 1106a).